Consider the following 487-residue polypeptide: ATP synthase subunit beta (487 aa).

164-171 is a binding site for ATP; sequence GGAGVGKT.

This sequence belongs to the ATPase alpha/beta chains family. F-type ATPases have 2 components, CF(1) - the catalytic core - and CF(0) - the membrane proton channel. CF(1) has five subunits: alpha(3), beta(3), gamma(1), delta(1), epsilon(1). CF(0) has four main subunits: a(1), b(1), b'(1) and c(9-12).

It localises to the cellular thylakoid membrane. The catalysed reaction is ATP + H2O + 4 H(+)(in) = ADP + phosphate + 5 H(+)(out). In terms of biological role, produces ATP from ADP in the presence of a proton gradient across the membrane. The catalytic sites are hosted primarily by the beta subunits. This chain is ATP synthase subunit beta, found in Synechococcus sp. (strain WH7803).